The following is a 130-amino-acid chain: Small ribosomal subunit protein uS8y (130 aa).

Belongs to the universal ribosomal protein uS8 family.

The sequence is that of Small ribosomal subunit protein uS8y (RPS15AC) from Arabidopsis thaliana (Mouse-ear cress).